The chain runs to 111 residues: WAP four-disulfide core domain protein 12 (111 aa).

The signal sequence occupies residues 1–23 (MRSSRFLVLMVSLALVTLVASEG). The WAP domain occupies 27–74 (NTEKPGVCPADNVRCIKSDPPQCHTDQDCQGIRKCCYLHCGFKCVIPV). Intrachain disulfides connect cysteine 34/cysteine 62, cysteine 41/cysteine 66, cysteine 49/cysteine 61, and cysteine 55/cysteine 70.

The protein resides in the secreted. Its function is as follows. Antibacterial protein. Putative acid-stable proteinase inhibitor. This Saimiri boliviensis boliviensis (Bolivian squirrel monkey) protein is WAP four-disulfide core domain protein 12 (WFDC12).